We begin with the raw amino-acid sequence, 637 residues long: Transcription factor GLABRA 3 (637 aa).

A bHLH domain is found at 437–486 (DETGNHAVLEKKRREKLNERFMTLRKIIPSINKIDKVSILDDTIEYLQEL). The segment at 497–521 (RESTDTETRGTMTMKRKKPCDAGER) is disordered. The binding with MYB0/GL1 and MYB23 stretch occupies residues 541 to 637 (NVGEAEPADT…EALQRVAWIC (97 aa)).

In terms of assembly, efficient DNA binding requires dimerization with another bHLH protein. Homodimer and heterodimer with BHLH2. Interacts directly with TTG1 and MYB0/GL1 to form a complex. Its interaction with TRY prevents MYB0/GL1 binding. Interacts with MYB75/PAP1, MYB90/PAP2, TT2, CPC, MYB23 and MYB66/WER. Interacts with MYB82. As to expression, mostly expressed in roots and flowers. Also present in stems and leaves, and, to a lower extent, in hypocotyls. Expressed in epidermal root hair cells (trichoblasts) and moves to root hairless cells (atrichoblasts) by a cell-to-cell movement through plasmodesmata (at protein level).

It is found in the nucleus. Its function is as follows. Transcription activator, when associated with MYB75/PAP1, MYB90/PAP2 or TT2. Involved in epidermal cell fate specification. Negatively regulates stomata formation, but, in association with TTG1 and MYB0/GL1, promotes trichome formation, branching and endoreplication. Also regulates trichome cell wall maturation. Together with MYB66/WER, promotes the formation of non-hair cells in root epidermis cells in the N position. Whereas together with CPC, promotes the formation of hair cells in root epidermis cells in the H position by inhibiting non-hair cell formation. Also seems to play a role in the activation of anthocyanin biosynthesis, probably together with MYB75/PAP1. Activates the transcription of GL2. The polypeptide is Transcription factor GLABRA 3 (GL3) (Arabidopsis thaliana (Mouse-ear cress)).